Consider the following 635-residue polypeptide: Threonine--tRNA ligase (635 aa).

The TGS domain maps to Met1–Thr61. Residues Asp242–Pro533 are catalytic. The Zn(2+) site is built by Cys333, His384, and His510.

The protein belongs to the class-II aminoacyl-tRNA synthetase family. Homodimer. Zn(2+) serves as cofactor.

The protein resides in the cytoplasm. It catalyses the reaction tRNA(Thr) + L-threonine + ATP = L-threonyl-tRNA(Thr) + AMP + diphosphate + H(+). In terms of biological role, catalyzes the attachment of threonine to tRNA(Thr) in a two-step reaction: L-threonine is first activated by ATP to form Thr-AMP and then transferred to the acceptor end of tRNA(Thr). Also edits incorrectly charged L-seryl-tRNA(Thr). In Burkholderia multivorans (strain ATCC 17616 / 249), this protein is Threonine--tRNA ligase.